The sequence spans 288 residues: Diaminopimelate epimerase (288 aa).

Asparagine 17, glutamine 47, and asparagine 67 together coordinate substrate. The Proton donor role is filled by cysteine 76. Residues 77–78 (GN), asparagine 164, asparagine 197, and 215–216 (ER) contribute to the substrate site. The active-site Proton acceptor is cysteine 224. Residue 225–226 (GS) coordinates substrate.

The protein belongs to the diaminopimelate epimerase family. As to quaternary structure, homodimer.

The protein resides in the cytoplasm. It carries out the reaction (2S,6S)-2,6-diaminopimelate = meso-2,6-diaminopimelate. It participates in amino-acid biosynthesis; L-lysine biosynthesis via DAP pathway; DL-2,6-diaminopimelate from LL-2,6-diaminopimelate: step 1/1. Catalyzes the stereoinversion of LL-2,6-diaminopimelate (L,L-DAP) to meso-diaminopimelate (meso-DAP), a precursor of L-lysine and an essential component of the bacterial peptidoglycan. This chain is Diaminopimelate epimerase, found in Rhodopseudomonas palustris (strain BisA53).